The following is a 190-amino-acid chain: Adenylate kinase (190 aa).

Residue 11–16 coordinates ATP; sequence GAGKGT. Residues 31 to 60 are NMP; that stretch reads STGDIFRFNLKNDTELGKQARVFMDNGELV. AMP is bound by residues Thr32, Arg37, 58 to 60, 86 to 89, and Gln93; these read ELV and GYPR. The interval 127-137 is LID; the sequence is ERGKTSGRADD. An ATP-binding site is contributed by Arg128. 2 residues coordinate AMP: Arg134 and Arg146. Gly174 contributes to the ATP binding site.

The protein belongs to the adenylate kinase family. As to quaternary structure, monomer.

The protein resides in the cytoplasm. The catalysed reaction is AMP + ATP = 2 ADP. It participates in purine metabolism; AMP biosynthesis via salvage pathway; AMP from ADP: step 1/1. Its function is as follows. Catalyzes the reversible transfer of the terminal phosphate group between ATP and AMP. Plays an important role in cellular energy homeostasis and in adenine nucleotide metabolism. The polypeptide is Adenylate kinase (Flavobacterium johnsoniae (strain ATCC 17061 / DSM 2064 / JCM 8514 / BCRC 14874 / CCUG 350202 / NBRC 14942 / NCIMB 11054 / UW101) (Cytophaga johnsonae)).